The following is a 67-amino-acid chain: Large ribosomal subunit protein bL35 (67 aa).

Residues 1 to 16 are compositionally biased toward basic residues; sequence MPKMKTKSSAKKRFRV. The segment at 1-24 is disordered; the sequence is MPKMKTKSSAKKRFRVRPGGTVKR.

This sequence belongs to the bacterial ribosomal protein bL35 family.

This is Large ribosomal subunit protein bL35 from Delftia acidovorans (strain DSM 14801 / SPH-1).